We begin with the raw amino-acid sequence, 105 residues long: Small ribosomal subunit protein uS10 (105 aa).

This sequence belongs to the universal ribosomal protein uS10 family. Part of the 30S ribosomal subunit.

Its function is as follows. Involved in the binding of tRNA to the ribosomes. The sequence is that of Small ribosomal subunit protein uS10 from Rickettsia prowazekii (strain Madrid E).